The chain runs to 626 residues: Division abnormally delayed protein (626 aa).

The signal sequence occupies residues 1–26 (MAARSVRLAQLLLFTLLCGFVGLSAA). The span at 41 to 52 (LHSATTHHRRRL) shows a compositional bias: basic residues. The disordered stretch occupies residues 41–65 (LHSATTHHRRRLQRDSRAKDAVGGS). Asn97 carries an N-linked (GlcNAc...) asparagine; atypical glycan. N-linked (GlcNAc...) asparagine glycosylation is found at Asn101, Asn150, and Asn187. The interval 533 to 607 (NSIQATHDIQ…GKTSGSNPLE (75 aa)) is disordered. O-linked (Xyl...) (heparan sulfate) serine glycosylation is found at Ser549, Ser569, Ser573, and Ser601. Gly residues predominate over residues 565–575 (GAHGSGDGSGD). Gly602 carries GPI-anchor amidated glycine lipidation. Residues 603-626 (SNPLEGTATWMLLTLVTMLFSSCS) constitute a propeptide, removed in mature form.

The protein belongs to the glypican family. In terms of assembly, interacts with nord; the interaction promotes dally degradation. Interacts with Magu. As part of the dally/ Magu complex, associates with fwe (isoforms ubi, LoseA and LoseB) and is unable to interact with fwe independently of Magu.

The protein localises to the cell membrane. Functionally, cell surface proteoglycan that bears heparan sulfate. Functions as a coreceptor for growth factors and morphogens, such as the products of dpp, to regulate signaling and distribution of these ligands. Required for cell division patterning during postembryonic development of the nervous system. Plays a role in dpp/BMP signaling possibly by stabilizing dpp and thereby creating a morphological gradient during wing development. Might have a role in testis development. Functions with magu and fwe in a mechanism of scaling, which utilises apoptosis to ensure that the dpp patterning gradient remains proportional to the size of the growing wing. In this mechanism, fwe represses dally and Magu-dependent activity in expanding the gradient, and dally/Magu inhibits fwe-dependent apoptosis to keep cell death rate low. When the levels of these different proteins are optimally regulated the gradient correctly scales with organ growth but when this fails, fwe-mediated apoptosis is activated to trim the developing tissue to match the correct size of the gradient. The polypeptide is Division abnormally delayed protein (dally) (Drosophila melanogaster (Fruit fly)).